Consider the following 1209-residue polypeptide: 3',5'-cyclic-AMP phosphodiesterase, isoform I (1209 aa).

Disordered regions lie at residues 16 to 35 (NVAK…GSGT), 59 to 82 (GGGS…KRKS), 275 to 353 (LYSG…PLPP), 372 to 403 (SATS…SPRI), 442 to 498 (ETLA…MQAE), 626 to 655 (VPAS…LSQG), and 754 to 792 (SAGQ…RLPT). Composition is skewed to gly residues over residues 25 to 35 (SSNGTGNGSGT) and 59 to 77 (GGGS…GSGS). Polar residues predominate over residues 275–290 (LYSGSNPSTNPCQSAV). Residues 291-314 (QNQGQNSNPNPNQNPNTNPNQNQQ) show a composition bias toward low complexity. A compositionally biased stretch (polar residues) spans 315–324 (RCSCQPQTSP). Residues 372 to 383 (SATSSSAGTVPP) show a composition bias toward low complexity. Polar residues predominate over residues 385–400 (GQQTQEYIAGTSSTPS). Composition is skewed to low complexity over residues 445–462 (ASSS…NSSS) and 472–483 (TSSSASALATSH). Polar residues-rich tracts occupy residues 484 to 498 (PSNS…MQAE) and 627 to 645 (PASN…SRSG). The 330-residue stretch at 795-1124 (VETPRENELG…DYYQSMIPPS (330 aa)) folds into the PDEase domain. Residue His-871 is the Proton donor of the active site. 871–875 (HNSLH) is a binding site for 3',5'-cyclic AMP. A divalent metal cation-binding residues include His-875, His-911, Asp-912, and Asp-1029. Residues Asp-912, Asp-1029, and Gln-1080 each contribute to the 3',5'-cyclic AMP site. Residues 1146 to 1163 (EESDQENLAELEEGDESG) are compositionally biased toward acidic residues. The tract at residues 1146-1209 (EESDQENLAE…CQNQPQHGGM (64 aa)) is disordered. The span at 1164-1181 (GESTTTGTTGTTAASALS) shows a compositional bias: low complexity. Over residues 1182 to 1193 (GAGGGGGGGGGM) the composition is skewed to gly residues. The segment covering 1199 to 1209 (GCQNQPQHGGM) has biased composition (polar residues).

Belongs to the cyclic nucleotide phosphodiesterase family. PDE4 subfamily. Monomer. A divalent metal cation serves as cofactor.

The enzyme catalyses 3',5'-cyclic AMP + H2O = AMP + H(+). Its pathway is purine metabolism; 3',5'-cyclic AMP degradation; AMP from 3',5'-cyclic AMP: step 1/1. Functionally, hydrolyzes the second messenger cAMP, which is a key regulator of many important physiological processes. Vital for female fertility. Required for learning/memory. This is 3',5'-cyclic-AMP phosphodiesterase, isoform I from Drosophila melanogaster (Fruit fly).